An 81-amino-acid polypeptide reads, in one-letter code: Cell division protein ZapB (81 aa).

A coiled-coil region spans residues Leu-5–Val-81. The tract at residues Val-43–Gln-64 is disordered. Over residues Gly-49–Gln-59 the composition is skewed to basic and acidic residues.

Belongs to the ZapB family. As to quaternary structure, homodimer. The ends of the coiled-coil dimer bind to each other, forming polymers. Interacts with FtsZ.

It localises to the cytoplasm. In terms of biological role, non-essential, abundant cell division factor that is required for proper Z-ring formation. It is recruited early to the divisome by direct interaction with FtsZ, stimulating Z-ring assembly and thereby promoting cell division earlier in the cell cycle. Its recruitment to the Z-ring requires functional FtsA or ZipA. The polypeptide is Cell division protein ZapB (Enterobacter sp. (strain 638)).